Here is a 384-residue protein sequence, read N- to C-terminus: Putative exopolyphosphatase (384 aa).

Aspartate 40, aspartate 42, aspartate 116, histidine 138, and aspartate 200 together coordinate Mn(2+).

This sequence belongs to the PPase class C family. The cofactor is Mn(2+).

The catalysed reaction is [phosphate](n) + H2O = [phosphate](n-1) + phosphate + H(+). Its function is as follows. Degradation of inorganic polyphosphates. This Schizosaccharomyces pombe (strain 972 / ATCC 24843) (Fission yeast) protein is Putative exopolyphosphatase.